Reading from the N-terminus, the 748-residue chain is ATP-dependent rRNA helicase SPB4 (748 aa).

Positions 15 to 43 match the Q motif motif; the sequence is WAKLNPPLSPWILDVINSMGFKNMTPVQA. One can recognise a Helicase ATP-binding domain in the interval 46–260; that stretch reads IPRAVKNQDC…GLGLRNPVRI (215 aa). Residue 59–66 coordinates ATP; sequence AVTGSGKT. Residues 119 to 156 are disordered; it reads ESEEETGDVEAHAPPFASSSRSPSPQTPDKPLFPLPML. Low complexity predominate over residues 132 to 142; that stretch reads PPFASSSRSPS. A compositionally biased stretch (pro residues) spans 143-152; that stretch reads PQTPDKPLFP. Positions 207–210 match the DEAD box motif; sequence DEAD. A Helicase C-terminal domain is found at 295–460; sequence KTLQLIRLLL…KAQRSILDFL (166 aa). A disordered region spans residues 614-748; that stretch reads AQRADNQSSN…IGGGMFDDLE (135 aa). Basic and acidic residues-rich tracts occupy residues 626 to 669 and 708 to 730; these read ARAE…KYEW and EIGK…KESS. Over residues 732–748 the composition is skewed to gly residues; the sequence is GGAGGGGIGGGMFDDLE.

It belongs to the DEAD box helicase family. DDX55/SPB4 subfamily. In terms of assembly, component of pre-60S ribosomal complexes.

It localises to the nucleus. The protein localises to the nucleolus. The enzyme catalyses ATP + H2O = ADP + phosphate + H(+). Functionally, ATP-binding RNA helicase involved in the biogenesis of 60S ribosomal subunits. Binds 90S pre-ribosomal particles and dissociates from pre-60S ribosomal particles after processing of 27SB pre-rRNA. Required for the normal formation of 18S rRNA through the processing of pre-rRNAs at sites A0, A1 and A2, and the normal formation of 25S and 5.8S rRNAs through the processing of pre-rRNAs at sites C1 and C2. The chain is ATP-dependent rRNA helicase SPB4 from Cryptococcus neoformans var. neoformans serotype D (strain B-3501A) (Filobasidiella neoformans).